The chain runs to 175 residues: Ribosome maturation factor RimM (175 aa).

The PRC barrel domain occupies 100–173 (EGEYYFHEII…TIIIRPMEGL (74 aa)).

This sequence belongs to the RimM family. Binds ribosomal protein uS19.

Its subcellular location is the cytoplasm. Its function is as follows. An accessory protein needed during the final step in the assembly of 30S ribosomal subunit, possibly for assembly of the head region. Essential for efficient processing of 16S rRNA. May be needed both before and after RbfA during the maturation of 16S rRNA. It has affinity for free ribosomal 30S subunits but not for 70S ribosomes. In Geobacillus kaustophilus (strain HTA426), this protein is Ribosome maturation factor RimM.